The primary structure comprises 173 residues: Large ribosomal subunit protein uL10 (173 aa).

It belongs to the universal ribosomal protein uL10 family. As to quaternary structure, part of the ribosomal stalk of the 50S ribosomal subunit. The N-terminus interacts with L11 and the large rRNA to form the base of the stalk. The C-terminus forms an elongated spine to which L12 dimers bind in a sequential fashion forming a multimeric L10(L12)X complex.

Forms part of the ribosomal stalk, playing a central role in the interaction of the ribosome with GTP-bound translation factors. The sequence is that of Large ribosomal subunit protein uL10 from Nitratidesulfovibrio vulgaris (strain ATCC 29579 / DSM 644 / CCUG 34227 / NCIMB 8303 / VKM B-1760 / Hildenborough) (Desulfovibrio vulgaris).